Here is a 280-residue protein sequence, read N- to C-terminus: F420-dependent methylenetetrahydromethanopterin dehydrogenase (280 aa).

This sequence belongs to the MTD family.

It carries out the reaction 5,10-methylenetetrahydromethanopterin + oxidized coenzyme F420-(gamma-L-Glu)(n) + 2 H(+) = 5,10-methenyl-5,6,7,8-tetrahydromethanopterin + reduced coenzyme F420-(gamma-L-Glu)(n). It participates in one-carbon metabolism; methanogenesis from CO(2); 5,10-methylene-5,6,7,8-tetrahydromethanopterin from 5,10-methenyl-5,6,7,8-tetrahydromethanopterin (coenzyme F420 route): step 1/1. Functionally, catalyzes the reversible reduction of methenyl-H(4)MPT(+) to methylene-H(4)MPT. This chain is F420-dependent methylenetetrahydromethanopterin dehydrogenase, found in Methanospirillum hungatei JF-1 (strain ATCC 27890 / DSM 864 / NBRC 100397 / JF-1).